Consider the following 109-residue polypeptide: Large ribosomal subunit protein uL24 (109 aa).

Belongs to the universal ribosomal protein uL24 family. Part of the 50S ribosomal subunit.

In terms of biological role, one of two assembly initiator proteins, it binds directly to the 5'-end of the 23S rRNA, where it nucleates assembly of the 50S subunit. Functionally, one of the proteins that surrounds the polypeptide exit tunnel on the outside of the subunit. This Geotalea uraniireducens (strain Rf4) (Geobacter uraniireducens) protein is Large ribosomal subunit protein uL24.